The primary structure comprises 861 residues: Seed linoleate 9S-lipoxygenase-3 (861 aa).

Residues 41-166 (QGFDILGSTV…HHKIDRIFFA (126 aa)) enclose the PLAT domain. The Lipoxygenase domain occupies 169 to 861 (TYLPSETPAP…FRGIPNSISI (693 aa)). Residues 215–257 (NPDSGENHARPVLGGSETYPYPRRGRTGRKPTRKDPNSESRSD) are disordered. The segment covering 237 to 246 (RRGRTGRKPT) has biased composition (basic residues). Over residues 247–257 (RKDPNSESRSD) the composition is skewed to basic and acidic residues. Fe cation-binding residues include His-522, His-527, His-713, Asn-717, and Ile-861.

The protein belongs to the lipoxygenase family. The cofactor is Fe cation.

It is found in the cytoplasm. The enzyme catalyses (9Z,12Z)-octadecadienoate + O2 = (9S)-hydroperoxy-(10E,12Z)-octadecadienoate. It functions in the pathway lipid metabolism; oxylipin biosynthesis. In terms of biological role, plant lipoxygenase may be involved in a number of diverse aspects of plant physiology including growth and development, pest resistance, and senescence or responses to wounding. It catalyzes the hydroperoxidation of lipids containing a cis,cis-1,4-pentadiene structure. This is Seed linoleate 9S-lipoxygenase-3 (LOX1.3) from Pisum sativum (Garden pea).